The sequence spans 597 residues: MLLTKRFSKLFKLTFIVLILCGLFVITNKYMDENTSVKEYKEYLDRYVQSYSNKYSSSSDAASADDSTPLRDNDEAGNEKLKSFYNNVFNFLMVDSPKGSTAKQYNEACLLKGDIGDRPDHYKDLYKLSAKELSKCLELSPDEVASLTKSHKDYVEHIATLVSPKGTYKGSGIATVGGGKFSLMAFLIIKTLRNMGTTLPVEVLIPPGDEGETEFCNKILPKYNSKCIYVSDILPRETIEKFVFKGYQFKSLALIASSFENLLLLDADNFPIKPLDNIFNEEPYVSTGLVMWPDFWRRTTHPLYYDIAGIAVDKKKRVRNSRDDITPPAVYTKDLKDLSDVPLSDLDGTIPDVSTESGQLMINKTKHLATALLSLFYNVNGPTWYYPIFSQKAAGEGDKETFIAAANFYGLSFYQVRTRTGVEGYHDEDGFHGVAMLQHDFVQDYGRYLNAMESIGNKYGGTKSADAIKFDKNYSLEKYTEEFFDNEDLNAKNHVDVMFIHSNFPKFDPYDLSKSNFLTTNGKPARSYTALKKVKNYDIELENFKVLNEYVCVNKNPFKYLDDLLGQDKTEWKRVCGYITDRLAFLESTHDKAIAGK.

Over 1-12 (MLLTKRFSKLFK) the chain is Cytoplasmic. A helical; Signal-anchor for type II membrane protein membrane pass occupies residues 13 to 28 (LTFIVLILCGLFVITN). Over 29-597 (KYMDENTSVK…STHDKAIAGK (569 aa)) the chain is Extracellular. N-linked (GlcNAc...) asparagine glycosylation is found at Asn34, Asn363, and Asn473.

Belongs to the MNN1/MNT family. Interacts with SVP26.

Its subcellular location is the golgi apparatus membrane. Its pathway is protein modification; protein glycosylation. Its function is as follows. Alpha-1,2-mannosyltransferase, responsible for addition of the first alpha-1,2-linked mannose to form the branches on the mannan backbone of oligosaccharides. The polypeptide is Alpha-1,2-mannosyltransferase MNN2 (MNN2) (Saccharomyces cerevisiae (strain ATCC 204508 / S288c) (Baker's yeast)).